The following is a 287-amino-acid chain: Pyridoxal kinase PdxY (287 aa).

Substrate-binding positions include S9 and 44–45 (MQ). The ATP site is built by D111, A142, E147, and K180. Residue D221 participates in substrate binding.

This sequence belongs to the pyridoxine kinase family. PdxY subfamily. In terms of assembly, homodimer. It depends on Mg(2+) as a cofactor.

The enzyme catalyses pyridoxal + ATP = pyridoxal 5'-phosphate + ADP + H(+). The protein operates within cofactor metabolism; pyridoxal 5'-phosphate salvage; pyridoxal 5'-phosphate from pyridoxal: step 1/1. In terms of biological role, pyridoxal kinase involved in the salvage pathway of pyridoxal 5'-phosphate (PLP). Catalyzes the phosphorylation of pyridoxal to PLP. This chain is Pyridoxal kinase PdxY, found in Burkholderia mallei (strain ATCC 23344).